We begin with the raw amino-acid sequence, 580 residues long: MVRFKELAELFEELERITSHKEIVRKLAGFFGGLKGDEVKDSAYLFLGSIGPAFENTTLGIKDRLVTRAIAGAYGVSEEEVKKRYARAGDLGDVAFELSKKREASLTIEEVFKRLRQIKEASGKGSQEKKTGLLSDILQKATPEEGKYIIRIVLGRLRLGFGDQFLLEAFSIAFTGDKKHAGKIKESYSVCTDIGELAQTLAEHGAGAPGYFSIKPGRPVKSMLAQRVESFEELEERIKGKKAAEEKYDGERVQIHKAGDEIKAFSRRLEDITAQYPDIIEAVRESISADTIVLDGEIVAYAELEKENTRIEEFYPFQNLMQRRRKYEVEKYREKCPVAVFFFDILYLNGESLLKKTYPERRALLEEHVNGSGIVHLTRRTVTENIEELEDFFNETVEKGLEGIVAKSMSSNSVYEAGKRSWLWLKWKQEYSEGMRETFDLVVVGSYYGKGKRKGSFGALLCAVLNEEEQQFETFTKVGTGFTEADAEEINSLLSAHTVSEAPKNVIIKKGMLPDIFIEPAVVIEVLGSEITNSPGHTAGEGEEETGLALRFPRFLRIRYDRAPFDATTVREIRDLKEGI.

Glu-245 contributes to the ATP binding site. Lys-247 functions as the N6-AMP-lysine intermediate in the catalytic mechanism. The ATP site is built by Arg-252, Arg-267, Glu-297, Phe-343, Arg-420, and Lys-426.

This sequence belongs to the ATP-dependent DNA ligase family. It depends on Mg(2+) as a cofactor.

It catalyses the reaction ATP + (deoxyribonucleotide)n-3'-hydroxyl + 5'-phospho-(deoxyribonucleotide)m = (deoxyribonucleotide)n+m + AMP + diphosphate.. DNA ligase that seals nicks in double-stranded DNA during DNA replication, DNA recombination and DNA repair. The sequence is that of DNA ligase 1 from Methanosarcina acetivorans (strain ATCC 35395 / DSM 2834 / JCM 12185 / C2A).